Reading from the N-terminus, the 479-residue chain is Solute carrier family 46 member 2 (479 aa).

Over 1 to 23 the chain is Cytoplasmic; sequence MGPGGTCPWSSRLSGFRVRTWIE. Residues 24-44 form a helical membrane-spanning segment; it reads PVVASTQVAGSLYDAGLLLVV. Residues 45-80 are Extracellular-facing; the sequence is KESFKSEAGGSSNYSANQSLVEYQEDQQQKAISNFN. Asn57 and Asn61 each carry an N-linked (GlcNAc...) asparagine glycan. Residues 81-101 form a helical membrane-spanning segment; it reads IIYNLVLGLTPLLSAYGLGWL. Over 102–110 the chain is Cytoplasmic; it reads SDRYHRKIS. A helical membrane pass occupies residues 111–131; that stretch reads ICTAMLGFLLSRIGLLLKVML. The Extracellular portion of the chain corresponds to 132–140; that stretch reads DWPVEVMYG. Residues 141–161 form a helical membrane-spanning segment; the sequence is AAALNGLCGSFSAYWSGVMAL. At 162 to 174 the chain is on the cytoplasmic side; that stretch reads GSLGCSEGRRSVR. The helical transmembrane segment at 175–195 threads the bilayer; sequence LILIDLVLGLAGFSGSMASGH. Residues 196–207 lie on the Extracellular side of the membrane; it reads LFKQIVGHSAQG. Residues 208-228 form a helical membrane-spanning segment; the sequence is LLLTACSVGCAAFALFYSLFV. At 229–281 the chain is on the cytoplasmic side; sequence LKVPESKPNKVHPTVDTVSGMMGTYRTLDPDQQDKQNVPRNPRTPGKGKSSQR. Residues 255–277 form a disordered region; it reads TLDPDQQDKQNVPRNPRTPGKGK. A helical transmembrane segment spans residues 282–302; sequence EVVALLFVGAIIYDLAAVGTV. Over 303–321 the chain is Extracellular; that stretch reads DVMALFVLKEPLHWNQVQL. Residues 322 to 342 form a helical membrane-spanning segment; it reads GYGMASGYIIFITSFLGVLVF. Over 343-348 the chain is Cytoplasmic; the sequence is SRCFRD. The chain crosses the membrane as a helical span at residues 349–369; it reads TTMIIIGMLSFGSGALLLAFV. At 370–371 the chain is on the extracellular side; it reads KE. Residues 372–392 traverse the membrane as a helical segment; that stretch reads TYMFYIARAIMLFALIPITTI. The Cytoplasmic segment spans residues 393-407; sequence RSAMSKLIKDSSYGK. Residues 408–428 form a helical membrane-spanning segment; sequence IFVILQLCLTLTGVVTSTIYN. The Extracellular portion of the chain corresponds to 429 to 441; the sequence is KIYQLTLDKFIGT. The helical transmembrane segment at 442–462 threads the bilayer; that stretch reads CFVLSSFLSFLAIVPIGVVAY. The Cytoplasmic segment spans residues 463-479; sequence KQVPRSQQGECAEKQRS.

Belongs to the major facilitator superfamily. SLC46A family. Glycosylated. In terms of tissue distribution, expressed on cortical epithelial cells in the thymus. Mainly expressed in the thymic cortex and is highly enriched in SCID thymus. Also expressed in lymph nodes, heart, fetal liver, brain, spleen, intestine and kidney, but not in adult liver, skin, skeletal muscle and lung. Expressed in skin epidermis.

The protein resides in the endosome membrane. It is found in the cell membrane. It carries out the reaction N-acetyl-beta-D-glucosaminyl-(1-&gt;4)-1,6-anhydro-N-acetyl-beta-D-muramoyl-L-alanyl-gamma-D-glutamyl-meso-2,6-diaminopimeloyl-D-alanine(out) + n H(+)(out) = N-acetyl-beta-D-glucosaminyl-(1-&gt;4)-1,6-anhydro-N-acetyl-beta-D-muramoyl-L-alanyl-gamma-D-glutamyl-meso-2,6-diaminopimeloyl-D-alanine(in) + n H(+)(in). It catalyses the reaction L-alanyl-gamma-D-glutamyl-meso-2,6-diaminopimelate(out) + n H(+)(out) = L-alanyl-gamma-D-glutamyl-meso-2,6-diaminopimelate(in) + n H(+)(in). The catalysed reaction is N-acetyl-D-muramoyl-L-alanyl-D-isoglutamine(out) + n H(+)(out) = N-acetyl-D-muramoyl-L-alanyl-D-isoglutamine(in) + n H(+)(in). The enzyme catalyses 2',3'-cGAMP(out) + n H(+)(out) = 2',3'-cGAMP(in) + n H(+)(in). It carries out the reaction 3',3'-cGAMP(out) + n H(+)(out) = 3',3'-cGAMP(in) + n H(+)(in). Its activity is regulated as follows. Down-regulated by the anti-inflammatory drug methotrexate. Proton-coupled transporter that delivers pathogen-associated or danger-associated molecular patterns to cytosolic pattern recognition receptors as part of the innate immune response to microbes or tissue injury. Has selectivity toward muropeptides that contain the amino acid diaminopimelic acid (DAP-type peptidoglycan muropeptides) including Tri-DAP and tracheal toxin (TCT), common in Gram-negative bacteria and Gram-positive bacilli. In the context of immune recognition of skin microbiota, shuttles bacterial muropeptides across the endolysosomal membranes into the cytosol for recognition by NOD1, triggering MYD88-dependent secretion of IL1A and neutrophil recruitment in a pyroptosis-type inflammatory process. To a lesser extent and redundantly, transports muramyl dipeptides derived from most bacterial proteoglycans, eliciting NOD2 receptor activation and downstream inflammatory responses. Postulated to function as an importer of cyclic GMP-AMP dinucleotides (cGAMPs) in monocyte and macrophage cell lineages. Selectively imports cGAMPs derived from pathogenic bacteria such as 3'3'-cGAMP thus providing for differential immune recognition of pathogenic versus commensal bacteria. During tumorigenesis may transport extracellular tumor-derived 2'3'-cGAMP across the plasma membrane of M1-polarized macrophages to activate the anti-tumoral stimulator of interferon genes (STING) pathway. The transport mechanism, its electrogenicity and stoichiometry remain to be elucidated. The polypeptide is Solute carrier family 46 member 2 (Mus musculus (Mouse)).